We begin with the raw amino-acid sequence, 311 residues long: Taste receptor type 2 member 40 (311 aa).

At 1 to 9 (MSSLFSSFC) the chain is on the extracellular side. Residues 10–30 (LVIAIFESVVGLLGNGTIVAV) traverse the membrane as a helical segment. Residues 31–55 (SSTSCIRSKILSSYDVIVIFLSLSR) are Cytoplasmic-facing. Residues 56-76 (FFLQLWMILDFLLIFFCQPSY) form a helical membrane-spanning segment. Residues 77–87 (YEENLFVTFKT) are Extracellular-facing. The helical transmembrane segment at 88-108 (VFIFLNSYSFWFAAWLSVFYC) threads the bilayer. Over 109-128 (VKVASFTQSFLSWLKQRIAS) the chain is Cytoplasmic. The chain crosses the membrane as a helical span at residues 129–149 (LIPWMLITSSLFSFATSLPFF). Topologically, residues 150 to 178 (WDSYNAHSNFTTPLTMTNSSKRITTRKTN) are extracellular. A helical membrane pass occupies residues 179 to 199 (LIFLILLCNVGIALPSIMLVF). The Cytoplasmic segment spans residues 200–235 (SSILLIRSLWRHTRQMQNNATGFRDPSLEALIGAIK). A helical transmembrane segment spans residues 236-256 (TVFSFLLLYITNFIALILILS). The Extracellular segment spans residues 257–266 (DTFVPLSTEE). Residues 267 to 287 (AICVVVVAACPAGQSMVLIWS) traverse the membrane as a helical segment. The Cytoplasmic segment spans residues 288 to 311 (NPRFRELLSSILHYVNSCVRARCS).

Belongs to the G-protein coupled receptor T2R family. In terms of tissue distribution, expressed in the oral cavity, as well as in the gastrointestinal tract, including in the upper palate, tongue, proventriculus, ventriculus, duodenum, jejunum, ileum, cecum and colon.

The protein resides in the cell membrane. Functionally, bitter taste receptor. Binds quinine, dextromethorphan, diphenhydramine, diphenidol, chlorpheniramine, diphenidol, chloramphenicol, chloroquine and coumarin, this latter being a weak agonist, as well as epiquinidine, ethylhydrocupreine and quinidine. This is Taste receptor type 2 member 40 (TAS2R40) from Gallus gallus (Chicken).